The following is a 698-amino-acid chain: Sucrose non-fermenting protein kinase 1 (698 aa).

The interval 1–48 is disordered; sequence MAPRGFEDEELTISLSSSHVRRPQQQQPPPPTQQQHAHQPGSRPADAP. The region spanning 62 to 313 is the Protein kinase domain; the sequence is YKVLRTLGEG…IEDIRADPWF (252 aa). ATP-binding positions include 68 to 76 and lysine 91; that span reads LGEGSFGKV. The active-site Proton acceptor is the aspartate 184. The auto-inhibitory domain (AID) stretch occupies residues 320-417; it reads YLQLPVEEFF…ALLEPEGSSP (98 aa). The 38-residue stretch at 360 to 397 folds into the UBA domain; that stretch reads VTEKISKTMGYGKNDVEEALQASEPSAIKDAYMIVREN. Disordered stretches follow at residues 410–435, 482–525, and 564–597; these read LEPE…TTTA, TRTD…KKTK, and ESRH…IDPM. Residues 415–435 show a composition bias toward low complexity; sequence SSPMLSMSSARSATSTTTTTA. 2 stretches are compositionally biased toward basic and acidic residues: residues 484 to 493 and 564 to 573; these read TDAEKEETSR and ESRHAEERAE.

This sequence belongs to the protein kinase superfamily. CAMK Ser/Thr protein kinase family. SNF1 subfamily. As to quaternary structure, component of the AMP-activated protein kinase complex also known as the SNF1 kinase complex (Snf1c), a heterotrimeric complex composed of a catalytic subunit alpha and 2 regulatory subunits beta and gamma.

The protein resides in the cytoplasm. Its subcellular location is the nucleus. The catalysed reaction is L-seryl-[protein] + ATP = O-phospho-L-seryl-[protein] + ADP + H(+). It carries out the reaction L-threonyl-[protein] + ATP = O-phospho-L-threonyl-[protein] + ADP + H(+). Functionally, catalytic subunit of the AMP-activated protein kinase complex also known as the SNF1 kinase complex (Snf1c), a central regulator of cellular energy homeostasis, which, in response to a fall in intracellular ATP levels, activates energy-producing pathways and inhibits energy-consuming processes. The complex phosphorylates histone H3 to form H3S10ph, which promotes H3K14ac formation, leading to transcriptional activation through TBP recruitment to the promoters. Activates the expression of the galactose oxidase (GOA) gene and of several cell wall-degrading enzymes (CWDEs) such as pectate lyase, xylanase and glucanase. Plays an important role in sudden death syndrome (SDS) by controlling the colonization of the infected roots. This chain is Sucrose non-fermenting protein kinase 1, found in Fusarium virguliforme.